The chain runs to 340 residues: Heat-inducible transcription repressor HrcA (340 aa).

Belongs to the HrcA family.

Its function is as follows. Negative regulator of class I heat shock genes (grpE-dnaK-dnaJ and groELS operons). Prevents heat-shock induction of these operons. The chain is Heat-inducible transcription repressor HrcA from Phytoplasma australiense.